A 430-amino-acid chain; its full sequence is CC-adding tRNA nucleotidyltransferase (430 aa).

33-36 (GCVR) is a binding site for CTP. Residues Asp-46 and Asp-48 each contribute to the Mg(2+) site. Residues 108-109 (RD), Asn-113, 150-159 (DPLRIVRAYR), and Arg-190 contribute to the CTP site.

This sequence belongs to the tRNA nucleotidyltransferase/poly(A) polymerase family. Requires Mg(2+) as cofactor.

The catalysed reaction is a tRNA precursor + 2 CTP = a tRNA with a 3' CC end + 2 diphosphate. In terms of biological role, tRNA nucleotidyltransferase involved in the synthesis of the tRNA CCA terminus. Adds the two cytidine residues to tRNA. The polypeptide is CC-adding tRNA nucleotidyltransferase (Geobacter sulfurreducens (strain ATCC 51573 / DSM 12127 / PCA)).